The chain runs to 663 residues: MIDRKDTNRFKLVSKYSPSGDQPQAIETLVDNIEGGEKAQILKGATGTGKTYTMSQVIAQVNKPTLVIAHNKTLAGQLYGEFKEFFPDNAVEYFVSYYDYYQPEAYVPSSDTYIEKDSSVNDEIDKLRHSATSSLLERNDVIVVASVSCIYGLGSPKEYADSVVSLRPGQEISRDQLLNNLVDIQFERNDIDFQRGKFRVRGDVVEVFPASRDEHAFRIEFFGDEIDRIREIESLTGRVLGEVEHLAIFPATHFMTNDEHMEEAISKIQAEMENQVELFEKEGKLIEAQRIRQRTEYDIEMLREMGYTNGVENYSRHMDGRSEGEPPFTLLDFFPEDFLIMIDESHMTMGQIKGMYNGDRSRKEMLVNYGFRLPSALDNRPLRREEFESHVHQIVYVSATPGDYEMEQTDTVVEQIIRPTGLLDPEVEVRPSMGQMDDLLGEINLRTEKGERTFITTLTKRMAEDLTDYLKEMGVKVKYMHSDIKTLERTEIIRDLRLGVFDVLIGINLLREGIDVPEVSLVAILDADKEGFLRNERGLIQTIGRAARNSNGHVIMYADKITDSMQRAMDETARRRRLQMDYNEKHGIVPQTIKKEIRDLIAITKSNDSDKPEKVVDYSSLSKKERQAEIKALQQQMQEAAELLDFELAAQIRDVILELKAID.

One can recognise a Helicase ATP-binding domain in the interval 31–418 (DNIEGGEKAQ…TDTVVEQIIR (388 aa)). Position 44–51 (44–51 (GATGTGKT)) interacts with ATP. The short motif at 97–120 (YYDYYQPEAYVPSSDTYIEKDSSV) is the Beta-hairpin element. The Helicase C-terminal domain occupies 435 to 601 (QMDDLLGEIN…TIKKEIRDLI (167 aa)). The 36-residue stretch at 627–662 (QAEIKALQQQMQEAAELLDFELAAQIRDVILELKAI) folds into the UVR domain.

This sequence belongs to the UvrB family. Forms a heterotetramer with UvrA during the search for lesions. Interacts with UvrC in an incision complex.

Its subcellular location is the cytoplasm. Its function is as follows. The UvrABC repair system catalyzes the recognition and processing of DNA lesions. A damage recognition complex composed of 2 UvrA and 2 UvrB subunits scans DNA for abnormalities. Upon binding of the UvrA(2)B(2) complex to a putative damaged site, the DNA wraps around one UvrB monomer. DNA wrap is dependent on ATP binding by UvrB and probably causes local melting of the DNA helix, facilitating insertion of UvrB beta-hairpin between the DNA strands. Then UvrB probes one DNA strand for the presence of a lesion. If a lesion is found the UvrA subunits dissociate and the UvrB-DNA preincision complex is formed. This complex is subsequently bound by UvrC and the second UvrB is released. If no lesion is found, the DNA wraps around the other UvrB subunit that will check the other stand for damage. The protein is UvrABC system protein B of Streptococcus agalactiae serotype III (strain NEM316).